The sequence spans 400 residues: S-adenosylmethionine synthase (400 aa).

136-141 (GTGSTD) serves as a coordination point for ATP.

It belongs to the AdoMet synthase 2 family. It depends on Mg(2+) as a cofactor.

The catalysed reaction is L-methionine + ATP + H2O = S-adenosyl-L-methionine + phosphate + diphosphate. It functions in the pathway amino-acid biosynthesis; S-adenosyl-L-methionine biosynthesis; S-adenosyl-L-methionine from L-methionine: step 1/1. Its function is as follows. Catalyzes the formation of S-adenosylmethionine from methionine and ATP. The chain is S-adenosylmethionine synthase from Methanospirillum hungatei JF-1 (strain ATCC 27890 / DSM 864 / NBRC 100397 / JF-1).